Consider the following 185-residue polypeptide: Ribosome-recycling factor (185 aa).

It belongs to the RRF family.

Its subcellular location is the cytoplasm. Responsible for the release of ribosomes from messenger RNA at the termination of protein biosynthesis. May increase the efficiency of translation by recycling ribosomes from one round of translation to another. The chain is Ribosome-recycling factor from Pseudomonas aeruginosa (strain LESB58).